The sequence spans 476 residues: uncharacterized protein (476 aa).

One can recognise a LisH domain in the interval 7–39; it reads SRFYTNLLIANYLKHNGLEDTLAAFIRETALPL.

This is an uncharacterized protein from Saccharomyces cerevisiae (strain ATCC 204508 / S288c) (Baker's yeast).